Consider the following 435-residue polypeptide: MKFFLATLFASAVSSIAVDRLIPGAQIIPESDTRALLRVGGHHDKYHDRRTITIRPSRNDTDDVSRDFLWGIKHANHGGRLLLKKGEKYVIGRKLDLTFLDDIEVQLDGELKFTDDVSYWQENNFYYDFQKSITFWRWGGKDIKIFGTGLLNGNGQRWYNEFAGQEILDPDNEYYRPILFLTENATRISVEGITQLNSPCWTNFFIQSKDVSFDDVYIHAFSTNKSALPKNSDGFDSLNVDGLTVTNTRVDVGDDCFSPKPNTTNIFVQNLLCNNTHGVSMGSIGQYPGVMDIIEHAYIENVTLLNGQNGARLKAWAGQDVGYGRINNITYKNIRIENTDAPVVLDQCYFDIEAAECAQYPSQVNVTNILFENISGTSSGKNGKVVADLVCSPNAVCSDIQLKNINLTSPAGSPPEIVCEGVQGDIGVECQASAD.

An N-terminal signal peptide occupies residues 1–15; it reads MKFFLATLFASAVSS. 3 N-linked (GlcNAc...) asparagine glycosylation sites follow: asparagine 59, asparagine 184, and asparagine 224. 5 PbH1 repeats span residues 208–239, 240–261, 262–283, 294–315, and 326–347; these read SKDVSFDDVYIHAFSTNKSALPKNSDGFDSLN, VDGLTVTNTRVDVGDDCFSPKP, NTTNIFVQNLLCNNTHGVSMGS, IEHAYIENVTLLNGQNGARLKA, and INNITYKNIRIENTDAPVVLDQ. The active-site Proton donor is aspartate 254. A disulfide bond links cysteine 256 and cysteine 273. Residues asparagine 262 and asparagine 274 are each glycosylated (N-linked (GlcNAc...) asparagine). The active site involves histidine 277. N-linked (GlcNAc...) asparagine glycosylation is found at asparagine 301, asparagine 328, asparagine 365, and asparagine 373. Residues 366–388 form a PbH1 6 repeat; it reads VTNILFENISGTSSGKNGKVVAD. The cysteines at positions 391 and 397 are disulfide-linked. An N-linked (GlcNAc...) asparagine glycan is attached at asparagine 406.

The protein belongs to the glycosyl hydrolase 28 family.

It is found in the secreted. The enzyme catalyses [(1-&gt;4)-alpha-D-galacturonosyl](n) + H2O = alpha-D-galacturonate + [(1-&gt;4)-alpha-D-galacturonosyl](n-1). In terms of biological role, specific in hydrolyzing the terminal glycosidic bond of polygalacturonic acid and oligogalacturonates. The protein is Probable exopolygalacturonase B (pgxB) of Aspergillus flavus (strain ATCC 200026 / FGSC A1120 / IAM 13836 / NRRL 3357 / JCM 12722 / SRRC 167).